A 283-amino-acid chain; its full sequence is Thymidylate synthase (283 aa).

Arg-22 lines the dUMP pocket. The active-site Nucleophile is Cys-160. DUMP is bound by residues 180–183 (RSCD), Asn-191, and 221–223 (HIY). Position 183 (Asp-183) interacts with (6R)-5,10-methylene-5,6,7,8-tetrahydrofolate. Residue Ser-282 coordinates (6R)-5,10-methylene-5,6,7,8-tetrahydrofolate.

Belongs to the thymidylate synthase family. Bacterial-type ThyA subfamily. In terms of assembly, homodimer.

Its subcellular location is the cytoplasm. The catalysed reaction is dUMP + (6R)-5,10-methylene-5,6,7,8-tetrahydrofolate = 7,8-dihydrofolate + dTMP. It functions in the pathway pyrimidine metabolism; dTTP biosynthesis. Functionally, catalyzes the reductive methylation of 2'-deoxyuridine-5'-monophosphate (dUMP) to 2'-deoxythymidine-5'-monophosphate (dTMP) while utilizing 5,10-methylenetetrahydrofolate (mTHF) as the methyl donor and reductant in the reaction, yielding dihydrofolate (DHF) as a by-product. This enzymatic reaction provides an intracellular de novo source of dTMP, an essential precursor for DNA biosynthesis. This is Thymidylate synthase from Haemophilus influenzae (strain PittGG).